Reading from the N-terminus, the 146-residue chain is Ribonuclease H (146 aa).

Positions 1–141 constitute an RNase H type-1 domain; it reads MEKIDIFTDG…ADALANRGVE (141 aa). Mg(2+) is bound by residues D9, E47, D69, and D133.

The protein belongs to the RNase H family. In terms of assembly, monomer. Requires Mg(2+) as cofactor.

It localises to the cytoplasm. The catalysed reaction is Endonucleolytic cleavage to 5'-phosphomonoester.. Endonuclease that specifically degrades the RNA of RNA-DNA hybrids. This Herminiimonas arsenicoxydans protein is Ribonuclease H.